Here is a 313-residue protein sequence, read N- to C-terminus: Ribosomal RNA small subunit methyltransferase H (313 aa).

S-adenosyl-L-methionine contacts are provided by residues 36–38 (GGH), aspartate 56, phenylalanine 80, aspartate 102, and glutamine 109.

It belongs to the methyltransferase superfamily. RsmH family.

It is found in the cytoplasm. It carries out the reaction cytidine(1402) in 16S rRNA + S-adenosyl-L-methionine = N(4)-methylcytidine(1402) in 16S rRNA + S-adenosyl-L-homocysteine + H(+). Functionally, specifically methylates the N4 position of cytidine in position 1402 (C1402) of 16S rRNA. This is Ribosomal RNA small subunit methyltransferase H from Haemophilus ducreyi (strain 35000HP / ATCC 700724).